The sequence spans 249 residues: Triosephosphate isomerase (249 aa).

A substrate-binding site is contributed by 9-11; sequence NWK. Catalysis depends on His-95, which acts as the Electrophile. Residue Glu-167 is the Proton acceptor of the active site. Residues Gly-173, Ser-213, and 234–235 each bind substrate; that span reads GG.

The protein belongs to the triosephosphate isomerase family. In terms of assembly, homodimer.

It is found in the cytoplasm. It carries out the reaction D-glyceraldehyde 3-phosphate = dihydroxyacetone phosphate. Its pathway is carbohydrate biosynthesis; gluconeogenesis. It participates in carbohydrate degradation; glycolysis; D-glyceraldehyde 3-phosphate from glycerone phosphate: step 1/1. Functionally, involved in the gluconeogenesis. Catalyzes stereospecifically the conversion of dihydroxyacetone phosphate (DHAP) to D-glyceraldehyde-3-phosphate (G3P). The chain is Triosephosphate isomerase from Solibacter usitatus (strain Ellin6076).